We begin with the raw amino-acid sequence, 446 residues long: MNLYNNSNSSGSSNSSSSSNNKTNIDYNDINNNDILTPKGYHTSIYIDDNDLNNNQIINKNNNNNHNRNNNNNNNNNNNHNNPKKMVINLNPSGIFIPLMNDFDDDDDDEQESLIKNNKITIPTINSQIAIPILNNNDNNNNSNNKTEQTTTTTTIIKNTTIFNNKTISFGRIGFRSIVIFLILVPYIYILNFAIFPWTVNYETERKGKIHSFISMALVIQMLCNYYLCSTTDPGSFKDTISPSYYLLHPISSTDSNDHKKWCNKCNHQKPERAHHCRYCNRCVLRMDHHCQWLQNCIGLFNQKYFVLFLFYTSISIIYFFTLLIKRSIELVTKYTMEKTLPSFDLLHLFLLGILIIILIIAGISIMALLWTQIALISKGLTTIEHEDKKRKYQQPNYLNLYKKYDKGSIISNFSIVFGNLSFLWLLPTIPNNLKITSKKGDIFIV.

2 disordered regions span residues 1 to 33 (MNLYNNSNSSGSSNSSSSSNNKTNIDYNDINNN) and 56 to 83 (QIINKNNNNNHNRNNNNNNNNNNNHNNP). 4 N-linked (GlcNAc...) asparagine glycosylation sites follow: asparagine 5, asparagine 8, asparagine 14, and asparagine 21. The span at 56-81 (QIINKNNNNNHNRNNNNNNNNNNNHN) shows a compositional bias: low complexity. 4 N-linked (GlcNAc...) asparagine glycosylation sites follow: asparagine 141, asparagine 145, asparagine 159, and asparagine 165. 5 helical membrane-spanning segments follow: residues 178–198 (IVIFLILVPYIYILNFAIFPW), 210–230 (IHSFISMALVIQMLCNYYLCS), 305–325 (YFVLFLFYTSISIIYFFTLLI), 349–369 (LFLLGILIIILIIAGISIMAL), and 410–430 (IISNFSIVFGNLSFLWLLPTI). The region spanning 261–311 (KWCNKCNHQKPERAHHCRYCNRCVLRMDHHCQWLQNCIGLFNQKYFVLFLF) is the DHHC domain.

Belongs to the DHHC palmitoyltransferase family.

The protein localises to the membrane. The enzyme catalyses L-cysteinyl-[protein] + hexadecanoyl-CoA = S-hexadecanoyl-L-cysteinyl-[protein] + CoA. This chain is Putative ZDHHC-type palmitoyltransferase 2, found in Dictyostelium discoideum (Social amoeba).